The primary structure comprises 190 residues: Tegument antigen (190 aa).

2 EF-hand domains span residues 8 to 43 (SQME…YRLD) and 51 to 77 (IARF…KVSE). Ca(2+)-binding residues include Asp-55, Asp-57, Asp-59, Lys-61, and Glu-66.

Adult and schistosomula tegument.

The sequence is that of Tegument antigen from Schistosoma mansoni (Blood fluke).